Here is a 245-residue protein sequence, read N- to C-terminus: MDVGPSSLPHLGLKLLLLLLLLPLRGQANTGCYGIPGMPGLPGAPGKDGYDGLPGPKGEPGIPAIPGIRGPKGQKGEPGLPGHPGKNGPMGPPGMPGVPGPMGIPGEPGEEGRYKQKFQSVFTVTRQTHQPPAPNSLIRFNAVLTNPQGDYDTSTGKFTCKVPGLYYFVYHASHTANLCVLLYRSGVKVVTFCGHTSKTNQVNSGGVLLRLQVGEEVWLAVNDYYDMVGIQGSDSVFSGFLLFPD.

The N-terminal stretch at 1 to 28 (MDVGPSSLPHLGLKLLLLLLLLPLRGQA) is a signal peptide. In terms of domain architecture, Collagen-like spans 31–112 (GCYGIPGMPG…GIPGEPGEEG (82 aa)). 4-hydroxyproline occurs at positions 36, 39, 42, 45, 54, and 63. The interval 45–113 (PGKDGYDGLP…IPGEPGEEGR (69 aa)) is disordered. Positions 54–71 (PGPKGEPGIPAIPGIRGP) are enriched in low complexity. A 5-hydroxylysine modification is found at lysine 75. O-linked (Gal...) hydroxylysine glycosylation is present at lysine 75. Residues proline 81, proline 93, proline 96, proline 99, and proline 105 each carry the 4-hydroxyproline modification. Pro residues predominate over residues 90–99 (MGPPGMPGVP). Residues 115-245 (KQKFQSVFTV…VFSGFLLFPD (131 aa)) enclose the C1q domain. The cysteines at positions 179 and 193 are disulfide-linked.

In terms of assembly, core component of the complement C1 complex, a calcium-dependent complex composed of 1 molecule of the C1Q subcomplex, 2 molecules of C1R and 2 molecules of C1S. The C1Q subcomplex is composed 18 subunits: 3 chains of C1QA, C1QB, and C1QC trimerize to form 6 collagen-like triple helices connected to six globular ligand-recognition modules (C1q domain). O-linked glycans consist of Glc-Gal disaccharides bound to the oxygen atom of post-translationally added hydroxyl groups.

It is found in the secreted. It localises to the cell surface. Its activity is regulated as follows. The C1Q subcomplex is inhibited by sulfated molecules, such as triterpenoid sulfates, heparan sulfate, or chondroitin sulfates. In terms of biological role, core component of the complement C1 complex, a multiprotein complex that initiates the classical pathway of the complement system, a cascade of proteins that leads to phagocytosis and breakdown of pathogens and signaling that strengthens the adaptive immune system. The classical complement pathway is initiated by the C1Q subcomplex of the C1 complex, which specifically binds IgG or IgM immunoglobulins complexed with antigens, forming antigen-antibody complexes on the surface of pathogens: C1QA, together with C1QB and C1QC, specifically recognizes and binds the Fc regions of IgG or IgM via its C1q domain. Immunoglobulin-binding activates the proenzyme C1R, which cleaves C1S, initiating the proteolytic cascade of the complement system. The C1Q subcomplex is activated by a hexamer of IgG complexed with antigens, while it is activated by a pentameric IgM. The C1Q subcomplex also recognizes and binds phosphatidylserine exposed on the surface of cells undergoing programmed cell death, possibly promoting activation of the complement system. The sequence is that of Complement C1q subcomponent subunit C from Homo sapiens (Human).